A 47-amino-acid polypeptide reads, in one-letter code: Ruminococcin-A (47 aa).

Residues 1-23 (MRNDVLTLTNPMEENELEQILGG) form the signal peptide. A 2,3-didehydrobutyrine mark is found at Thr30 and Thr39. The beta-methyllanthionine (Thr-Cys) cross-link spans 30–35 (TISHEC). Residues 32–46 (SHECNMNTWQFLFTC) constitute a cross-link (lanthionine (Ser-Cys)). Residues 45-47 (TCC) constitute a cross-link (beta-methyllanthionine (Thr-Cys)).

It belongs to the type A lantibiotic family. Post-translationally, maturation of lantibiotics involves the enzymatic conversion of Thr, and Ser into dehydrated AA and the formation of thioether bonds with cysteine. This is followed by membrane translocation and cleavage of the modified precursor.

The protein resides in the secreted. In terms of biological role, lanthionine-containing peptide antibiotic (lantibiotic) active on Gram-positive bacteria. The bactericidal activity of lantibiotics is based on depolarization of energized bacterial cytoplasmic membranes, initiated by the formation of aqueous transmembrane pores. Ruminococcin A is a broad spectrum bacteriocin exhibiting activity against a wide range of pathogenic clostridia and B.longum. The polypeptide is Ruminococcin-A (rumA1) (Blautia hansenii (Ruminococcus hansenii)).